The primary structure comprises 304 residues: Methionyl-tRNA formyltransferase (304 aa).

110 to 113 (SLLP) contributes to the (6S)-5,6,7,8-tetrahydrofolate binding site.

Belongs to the Fmt family.

It catalyses the reaction L-methionyl-tRNA(fMet) + (6R)-10-formyltetrahydrofolate = N-formyl-L-methionyl-tRNA(fMet) + (6S)-5,6,7,8-tetrahydrofolate + H(+). Its function is as follows. Attaches a formyl group to the free amino group of methionyl-tRNA(fMet). The formyl group appears to play a dual role in the initiator identity of N-formylmethionyl-tRNA by promoting its recognition by IF2 and preventing the misappropriation of this tRNA by the elongation apparatus. In Sulfurovum sp. (strain NBC37-1), this protein is Methionyl-tRNA formyltransferase.